The primary structure comprises 97 residues: Protein C4 (97 aa).

Disordered stretches follow at residues 1 to 31 and 75 to 97; these read MGLL…PHTG and ANLP…PSIY. Glycine 2 carries N-myristoyl glycine; by host lipidation. A compositionally biased stretch (polar residues) spans 77–88; the sequence is LPTTHMPRQSIQ.

Belongs to the geminiviridae protein AC4/C4 family.

Its subcellular location is the host cell membrane. In terms of biological role, pathogenicity determinant. May act as a suppressor of RNA-mediated gene silencing, also known as post-transcriptional gene silencing (PTGS), a mechanism of plant viral defense that limits the accumulation of viral RNAs. The sequence is that of Protein C4 from Tomato yellow leaf curl China virus (TYLCCNV).